Consider the following 355-residue polypeptide: Uroporphyrinogen decarboxylase (355 aa).

Substrate-binding positions include 27–31, D78, Y155, S210, and H328; that span reads RQAGR.

It belongs to the uroporphyrinogen decarboxylase family. As to quaternary structure, homodimer.

Its subcellular location is the cytoplasm. It catalyses the reaction uroporphyrinogen III + 4 H(+) = coproporphyrinogen III + 4 CO2. Its pathway is porphyrin-containing compound metabolism; protoporphyrin-IX biosynthesis; coproporphyrinogen-III from 5-aminolevulinate: step 4/4. In terms of biological role, catalyzes the decarboxylation of four acetate groups of uroporphyrinogen-III to yield coproporphyrinogen-III. This is Uroporphyrinogen decarboxylase from Ectopseudomonas mendocina (strain ymp) (Pseudomonas mendocina).